The chain runs to 486 residues: Cardiolipin synthase A (486 aa).

The next 2 helical transmembrane spans lie at 3 to 23 (TFYTVISWLSVFGYWLLIAGV) and 38 to 58 (MAWLLIIYILPLVGIIAYLSF). PLD phosphodiesterase domains follow at residues 219-246 (MDLRQHRKIVLIDNYVAYTGSMNMVDPR) and 399-426 (EGGLLHSKSVLVDGQLSLVGTVNLDMRS). Residues His224, Lys226, Asp231, His404, Lys406, and Asp411 contribute to the active site.

It belongs to the phospholipase D family. Cardiolipin synthase subfamily. ClsA sub-subfamily.

It is found in the cell inner membrane. The catalysed reaction is 2 a 1,2-diacyl-sn-glycero-3-phospho-(1'-sn-glycerol) = a cardiolipin + glycerol. Catalyzes the reversible phosphatidyl group transfer from one phosphatidylglycerol molecule to another to form cardiolipin (CL) (diphosphatidylglycerol) and glycerol. The sequence is that of Cardiolipin synthase A from Yersinia pseudotuberculosis serotype IB (strain PB1/+).